The primary structure comprises 237 residues: Phosphoribosylaminoimidazole-succinocarboxamide synthase (237 aa).

The protein belongs to the SAICAR synthetase family.

The enzyme catalyses 5-amino-1-(5-phospho-D-ribosyl)imidazole-4-carboxylate + L-aspartate + ATP = (2S)-2-[5-amino-1-(5-phospho-beta-D-ribosyl)imidazole-4-carboxamido]succinate + ADP + phosphate + 2 H(+). The protein operates within purine metabolism; IMP biosynthesis via de novo pathway; 5-amino-1-(5-phospho-D-ribosyl)imidazole-4-carboxamide from 5-amino-1-(5-phospho-D-ribosyl)imidazole-4-carboxylate: step 1/2. This chain is Phosphoribosylaminoimidazole-succinocarboxamide synthase, found in Hamiltonella defensa subsp. Acyrthosiphon pisum (strain 5AT).